Reading from the N-terminus, the 501-residue chain is Probable cytosol aminopeptidase (501 aa).

Positions 268 and 273 each coordinate Mn(2+). The active site involves K280. Mn(2+)-binding residues include D291, D350, and E352. The active site involves R354.

Belongs to the peptidase M17 family. It depends on Mn(2+) as a cofactor.

The protein localises to the cytoplasm. It carries out the reaction Release of an N-terminal amino acid, Xaa-|-Yaa-, in which Xaa is preferably Leu, but may be other amino acids including Pro although not Arg or Lys, and Yaa may be Pro. Amino acid amides and methyl esters are also readily hydrolyzed, but rates on arylamides are exceedingly low.. The enzyme catalyses Release of an N-terminal amino acid, preferentially leucine, but not glutamic or aspartic acids.. Presumably involved in the processing and regular turnover of intracellular proteins. Catalyzes the removal of unsubstituted N-terminal amino acids from various peptides. In Pseudoalteromonas atlantica (strain T6c / ATCC BAA-1087), this protein is Probable cytosol aminopeptidase.